The chain runs to 298 residues: ATP phosphoribosyltransferase (298 aa).

Belongs to the ATP phosphoribosyltransferase family. Long subfamily. Requires Mg(2+) as cofactor.

Its subcellular location is the cytoplasm. The catalysed reaction is 1-(5-phospho-beta-D-ribosyl)-ATP + diphosphate = 5-phospho-alpha-D-ribose 1-diphosphate + ATP. It functions in the pathway amino-acid biosynthesis; L-histidine biosynthesis; L-histidine from 5-phospho-alpha-D-ribose 1-diphosphate: step 1/9. Feedback inhibited by histidine. In terms of biological role, catalyzes the condensation of ATP and 5-phosphoribose 1-diphosphate to form N'-(5'-phosphoribosyl)-ATP (PR-ATP). Has a crucial role in the pathway because the rate of histidine biosynthesis seems to be controlled primarily by regulation of HisG enzymatic activity. The chain is ATP phosphoribosyltransferase from Aliivibrio fischeri (strain MJ11) (Vibrio fischeri).